A 398-amino-acid polypeptide reads, in one-letter code: MIFKPELIKGIAKTSHPYGCRKEVLNQIEYCKNAKQFHGPKKVLIIGASSGFGLATRISLAFGGAKADTIGVSFETGITDRRTGTAGWYNNIFFKEFAEKEGLIAKNFIGDAFSDEVKENVIKYIKNEFGKIDLLIYSLASPRRKDPKTGNIYDSTLKTTSGEFQGPTIDMETDELVTTKVNSATDKEIEATKKVMGGEDWSEWCKLLLENDCLSDKAITISYSYIGASRTYKIYREGTIGEAKRHLENTAIQIDKEWQKKINGKAFVSVNKAIVTKASAYIPSFSLYAAVLYKVMKEKNLHENCIMQMQRMFADKIYAENLLEFDDSGRLRMDDWELREDVQSEVNELWEKITPDNFKILSDYDGYKKEFMQLNGFEIDGVNYSEDIDIEALKRLEP.

Residues 47–52, 74–75, 111–112, and 139–140 contribute to the NAD(+) site; these read GASSGF, FE, DA, and LA. Y225 serves as a coordination point for substrate. Residue Y235 is the Proton donor of the active site. NAD(+) contacts are provided by residues K244 and 274-276; that span reads IVT.

It belongs to the TER reductase family. In terms of assembly, monomer.

The enzyme catalyses a 2,3-saturated acyl-CoA + NAD(+) = a (2E)-enoyl-CoA + NADH + H(+). Its pathway is lipid metabolism; fatty acid biosynthesis. Its function is as follows. Involved in the fatty acid synthesis (FAS II). Catalyzes the reduction of a carbon-carbon double bond in an enoyl moiety that is covalently linked to a coenzyme A (CoA). The chain is Trans-2-enoyl-CoA reductase [NADH] from Clostridium beijerinckii (strain ATCC 51743 / NCIMB 8052) (Clostridium acetobutylicum).